A 420-amino-acid chain; its full sequence is UDP-N-acetylglucosamine 1-carboxyvinyltransferase (420 aa).

22–23 (KN) serves as a coordination point for phosphoenolpyruvate. UDP-N-acetyl-alpha-D-glucosamine is bound at residue arginine 91. The active-site Proton donor is cysteine 115. Residue cysteine 115 is modified to 2-(S-cysteinyl)pyruvic acid O-phosphothioketal. UDP-N-acetyl-alpha-D-glucosamine-binding positions include 120 to 124 (RPVDL), 160 to 163 (KVSV), aspartate 305, and isoleucine 327.

This sequence belongs to the EPSP synthase family. MurA subfamily.

It is found in the cytoplasm. The catalysed reaction is phosphoenolpyruvate + UDP-N-acetyl-alpha-D-glucosamine = UDP-N-acetyl-3-O-(1-carboxyvinyl)-alpha-D-glucosamine + phosphate. The protein operates within cell wall biogenesis; peptidoglycan biosynthesis. Its function is as follows. Cell wall formation. Adds enolpyruvyl to UDP-N-acetylglucosamine. This Pectobacterium carotovorum subsp. carotovorum (strain PC1) protein is UDP-N-acetylglucosamine 1-carboxyvinyltransferase.